The following is a 166-amino-acid chain: Putative tRNA (cytidine(34)-2'-O)-methyltransferase (166 aa).

Residues Leu83, Gly109, Ile130, and Ser138 each coordinate S-adenosyl-L-methionine.

It belongs to the class IV-like SAM-binding methyltransferase superfamily. RNA methyltransferase TrmH family. TrmL subfamily.

It is found in the cytoplasm. The catalysed reaction is cytidine(34) in tRNA + S-adenosyl-L-methionine = 2'-O-methylcytidine(34) in tRNA + S-adenosyl-L-homocysteine + H(+). It catalyses the reaction 5-carboxymethylaminomethyluridine(34) in tRNA(Leu) + S-adenosyl-L-methionine = 5-carboxymethylaminomethyl-2'-O-methyluridine(34) in tRNA(Leu) + S-adenosyl-L-homocysteine + H(+). Its function is as follows. Could methylate the ribose at the nucleotide 34 wobble position in tRNA. In Mycoplasma genitalium (strain ATCC 33530 / DSM 19775 / NCTC 10195 / G37) (Mycoplasmoides genitalium), this protein is Putative tRNA (cytidine(34)-2'-O)-methyltransferase.